Consider the following 425-residue polypeptide: Serine--tRNA ligase (425 aa).

232–234 (TSE) serves as a coordination point for L-serine. ATP is bound by residues 263–265 (RRE) and Val279. Glu286 serves as a coordination point for L-serine. Residue 350 to 353 (EVVS) participates in ATP binding. Residue Thr387 participates in L-serine binding.

It belongs to the class-II aminoacyl-tRNA synthetase family. Type-1 seryl-tRNA synthetase subfamily. As to quaternary structure, homodimer. The tRNA molecule binds across the dimer.

The protein resides in the cytoplasm. It catalyses the reaction tRNA(Ser) + L-serine + ATP = L-seryl-tRNA(Ser) + AMP + diphosphate + H(+). The enzyme catalyses tRNA(Sec) + L-serine + ATP = L-seryl-tRNA(Sec) + AMP + diphosphate + H(+). It functions in the pathway aminoacyl-tRNA biosynthesis; selenocysteinyl-tRNA(Sec) biosynthesis; L-seryl-tRNA(Sec) from L-serine and tRNA(Sec): step 1/1. In terms of biological role, catalyzes the attachment of serine to tRNA(Ser). Is also able to aminoacylate tRNA(Sec) with serine, to form the misacylated tRNA L-seryl-tRNA(Sec), which will be further converted into selenocysteinyl-tRNA(Sec). This Methanoregula boonei (strain DSM 21154 / JCM 14090 / 6A8) protein is Serine--tRNA ligase.